The sequence spans 433 residues: Phosphomethylpyrimidine synthase (433 aa).

Substrate-binding positions include Asn-69, Met-98, Tyr-127, His-163, 185 to 187 (SRG), 226 to 229 (DALR), and Glu-265. His-269 serves as a coordination point for Zn(2+). Residue Tyr-292 coordinates substrate. A Zn(2+)-binding site is contributed by His-333. 3 residues coordinate [4Fe-4S] cluster: Cys-409, Cys-412, and Cys-416.

The protein belongs to the ThiC family. Requires [4Fe-4S] cluster as cofactor.

It catalyses the reaction 5-amino-1-(5-phospho-beta-D-ribosyl)imidazole + S-adenosyl-L-methionine = 4-amino-2-methyl-5-(phosphooxymethyl)pyrimidine + CO + 5'-deoxyadenosine + formate + L-methionine + 3 H(+). It participates in cofactor biosynthesis; thiamine diphosphate biosynthesis. In terms of biological role, catalyzes the synthesis of the hydroxymethylpyrimidine phosphate (HMP-P) moiety of thiamine from aminoimidazole ribotide (AIR) in a radical S-adenosyl-L-methionine (SAM)-dependent reaction. In Finegoldia magna (strain ATCC 29328 / DSM 20472 / WAL 2508) (Peptostreptococcus magnus), this protein is Phosphomethylpyrimidine synthase.